The primary structure comprises 380 residues: Queuine tRNA-ribosyltransferase (380 aa).

D95 acts as the Proton acceptor in catalysis. Residues 95–99 (DSGGF), D149, Q192, and G219 contribute to the substrate site. The segment at 250–256 (GVGSPDS) is RNA binding. Residue D269 is the Nucleophile of the active site. The tract at residues 274–278 (TRIGR) is RNA binding; important for wobble base 34 recognition. Positions 307, 309, 312, and 338 each coordinate Zn(2+).

Belongs to the queuine tRNA-ribosyltransferase family. As to quaternary structure, homodimer. Within each dimer, one monomer is responsible for RNA recognition and catalysis, while the other monomer binds to the replacement base PreQ1. Zn(2+) is required as a cofactor.

It carries out the reaction 7-aminomethyl-7-carbaguanine + guanosine(34) in tRNA = 7-aminomethyl-7-carbaguanosine(34) in tRNA + guanine. It functions in the pathway tRNA modification; tRNA-queuosine biosynthesis. In terms of biological role, catalyzes the base-exchange of a guanine (G) residue with the queuine precursor 7-aminomethyl-7-deazaguanine (PreQ1) at position 34 (anticodon wobble position) in tRNAs with GU(N) anticodons (tRNA-Asp, -Asn, -His and -Tyr). Catalysis occurs through a double-displacement mechanism. The nucleophile active site attacks the C1' of nucleotide 34 to detach the guanine base from the RNA, forming a covalent enzyme-RNA intermediate. The proton acceptor active site deprotonates the incoming PreQ1, allowing a nucleophilic attack on the C1' of the ribose to form the product. After dissociation, two additional enzymatic reactions on the tRNA convert PreQ1 to queuine (Q), resulting in the hypermodified nucleoside queuosine (7-(((4,5-cis-dihydroxy-2-cyclopenten-1-yl)amino)methyl)-7-deazaguanosine). This is Queuine tRNA-ribosyltransferase from Geobacillus kaustophilus (strain HTA426).